The primary structure comprises 385 residues: Tuliposide A-converting enzyme 1, chloroplastic (385 aa).

The transit peptide at 1 to 77 directs the protein to the chloroplast; that stretch reads MSVASFFSSL…PSPSLSPTPT (77 aa). Residue Ser235 is the Acyl-ester intermediate of the active site. Residues Asp327 and His359 each act as charge relay system in the active site.

It belongs to the AB hydrolase superfamily. In terms of assembly, homodimer. In terms of tissue distribution, expressed in roots, stems, leaves, petals, stamens and pistils, but not in bulb scales.

It is found in the plastid. It localises to the chloroplast. It catalyses the reaction 6-tuliposide A = tulipalin A + D-glucose. Inhibited by NaF, AgNO(3), HgCl(2), CuSO(4) and phenylmethylsulfonyl fluoride (PMSF). In terms of biological role, lactone-forming carboxylesterases, specifically catalyzing intramolecular transesterification, but not hydrolysis. Involved in the biosynthesis of tulipalins, defensive chemicals that show antimicrobial activities against a broad range of strains of bacteria and fungi. Substrates are 6-tuliposide A &gt; 6-tuliposide B. This is Tuliposide A-converting enzyme 1, chloroplastic (TCEA1) from Tulipa gesneriana (Garden tulip).